Reading from the N-terminus, the 85-residue chain is U4-theraphotoxin-Hhn1a (85 aa).

A signal peptide spans 1–22; that stretch reads MKMTLIAILTCAAVLVLHITAA. A propeptide spanning residues 23–48 is cleaved from the precursor; that stretch reads EELEAESQLMEVGMPDTELEAVDEER. Intrachain disulfides connect Cys-52–Cys-66, Cys-56–Cys-77, and Cys-71–Cys-82.

Belongs to the neurotoxin 12 (Hwtx-2) family. 02 (Hwtx-2) subfamily. As to quaternary structure, monomer. In terms of tissue distribution, expressed by the venom gland.

It is found in the secreted. Functionally, neurotoxin active on both insects and mammals. The protein is U4-theraphotoxin-Hhn1a of Cyriopagopus hainanus (Chinese bird spider).